We begin with the raw amino-acid sequence, 462 residues long: Integrator complex subunit 12 (462 aa).

The tract at residues 42 to 132 (GIDSSYRPSQ…PETQSSPITV (91 aa)) is disordered. Positions 59–86 (ISSTKNISIKQEPKISSSLPSGNNNGKV) are enriched in polar residues. Lys-68 is covalently cross-linked (Glycyl lysine isopeptide (Lys-Gly) (interchain with G-Cter in SUMO2)). Residues 88 to 124 (TTEKVKKEAEKRPADKMKSDITEGVDIPKKPRLEKPE) are compositionally biased toward basic and acidic residues. Position 128 is a phosphoserine (Ser-128). A PHD-type zinc finger spans residues 159–215 (GLACVVCRQMMVASGNQLVECQECHNLYHRDCHKPQVTDKEANDPRLVWYCARCTRQ). Lys-254 participates in a covalent cross-link: Glycyl lysine isopeptide (Lys-Gly) (interchain with G-Cter in SUMO2). The segment covering 301 to 328 (SSAGPSTAKLSSTTQNNTGKPATSSANQ) has biased composition (polar residues). The segment at 301-462 (SSAGPSTAKL…KKAAQKKLKK (162 aa)) is disordered. Composition is skewed to low complexity over residues 347–358 (KIGSNNSTTPTV) and 382–437 (VSKV…GPTS). Basic residues predominate over residues 449–462 (QMVKKKAAQKKLKK).

This sequence belongs to the Integrator subunit 12 family. In terms of assembly, component of the Integrator complex, composed of core subunits INTS1, INTS2, INTS3, INTS4, INTS5, INTS6, INTS7, INTS8, INTS9/RC74, INTS10, INTS11/CPSF3L, INTS12, INTS13, INTS14 and INTS15. The core complex associates with protein phosphatase 2A subunits PPP2CA and PPP2R1A, to form the Integrator-PP2A (INTAC) complex. In terms of processing, dephosphorylated at Ser-128 by the PNUTS-PP1 complex, promoting RNA polymerase II transcription pause-release.

The protein localises to the nucleus. Component of the integrator complex, a multiprotein complex that terminates RNA polymerase II (Pol II) transcription in the promoter-proximal region of genes. The integrator complex provides a quality checkpoint during transcription elongation by driving premature transcription termination of transcripts that are unfavorably configured for transcriptional elongation: the complex terminates transcription by (1) catalyzing dephosphorylation of the C-terminal domain (CTD) of Pol II subunit POLR2A/RPB1 and SUPT5H/SPT5, (2) degrading the exiting nascent RNA transcript via endonuclease activity and (3) promoting the release of Pol II from bound DNA. The integrator complex is also involved in terminating the synthesis of non-coding Pol II transcripts, such as enhancer RNAs (eRNAs), small nuclear RNAs (snRNAs), telomerase RNAs and long non-coding RNAs (lncRNAs). Mediates recruitment of cytoplasmic dynein to the nuclear envelope, probably as component of the integrator complex. This chain is Integrator complex subunit 12 (INTS12), found in Pongo abelii (Sumatran orangutan).